The sequence spans 246 residues: Bidirectional sugar transporter SWEET3a (246 aa).

Topologically, residues 1 to 6 (MFPDIR) are extracellular. A helical membrane pass occupies residues 7–27 (FIVGIIGSVACMLLYSAPILT). One can recognise a MtN3/slv 1 domain in the interval 7-96 (FIVGIIGSVA…ISIYVWFAPR (90 aa)). At 28-42 (FKRVIKKASVEEFSC) the chain is on the cytoplasmic side. The helical transmembrane segment at 43 to 63 (IPYILALFSCLTYSWYGFPVV) threads the bilayer. The Extracellular portion of the chain corresponds to 64–74 (SYGWENMTVCS). Asn69 carries N-linked (GlcNAc...) asparagine glycosylation. Residues 75–95 (ISSLGVLFEGTFISIYVWFAP) form a helical membrane-spanning segment. The Cytoplasmic portion of the chain corresponds to 96–101 (RGKKKQ). Residues 102-122 (VMLMASLILAVFCMTVFFSSF) traverse the membrane as a helical segment. Topologically, residues 123–131 (SIHNHHIRK) are extracellular. Residues 132 to 152 (VFVGSVGLVSSISMYGSPLVA) traverse the membrane as a helical segment. In terms of domain architecture, MtN3/slv 2 spans 133-217 (FVGSVGLVSS…VVYCIYSKCK (85 aa)). Topologically, residues 153–166 (MKQVIRTKSVEFMP) are cytoplasmic. Residues 167–187 (FYLSLFTLFTSLTWMAYGVIG) traverse the membrane as a helical segment. The Extracellular segment spans residues 188–191 (RDPF). The chain crosses the membrane as a helical span at residues 192 to 212 (IATPNCIGSIMGILQLVVYCI). Topologically, residues 213–246 (YSKCKEAPKVLHDIEQANVVKIPTSHVDTKGHNP) are cytoplasmic.

The protein belongs to the SWEET sugar transporter family. As to quaternary structure, forms homooligomers and/or heterooligomers.

Its subcellular location is the cell membrane. Mediates both low-affinity uptake and efflux of sugar across the plasma membrane. The sequence is that of Bidirectional sugar transporter SWEET3a (SWEET3A) from Oryza sativa subsp. japonica (Rice).